The sequence spans 349 residues: N-acetyltaurine hydrolase (349 aa).

Histidine 26, histidine 28, glutamate 169, histidine 201, histidine 230, and aspartate 298 together coordinate a divalent metal cation.

It belongs to the metallo-dependent hydrolases superfamily. Phosphotriesterase family. Requires a divalent metal cation as cofactor.

It localises to the cytoplasm. It is found in the cytosol. It carries out the reaction N-acetyltaurine + H2O = taurine + acetate. It catalyses the reaction N-propanoyltaurine + H2O = propanoate + taurine. The enzyme catalyses N-acetyl-L-methionine + H2O = L-methionine + acetate. The catalysed reaction is N-acetyl-L-isoleucine + H2O = L-isoleucine + acetate. It carries out the reaction N-acetyl-L-leucine + H2O = L-leucine + acetate. It catalyses the reaction N-acetyl-L-valine + H2O = L-valine + acetate. Functionally, N-acetyltaurine hydrolase that regulates feeding by catalyzing the hydrolysis of N-acetyltaurine into taurine and acetate. N-acetyltaurine has anorexigenic and anti-obesity effects that are dependent on GFRAL receptor and GDF15. PTER also acts on other N-acetyl amino acids (Met, Ile, Leu, Val) and N-propionyltaurine, but at lower rates. The polypeptide is N-acetyltaurine hydrolase (PTER) (Bos taurus (Bovine)).